An 835-amino-acid chain; its full sequence is Translation initiation factor IF-2 (835 aa).

Residues 1–243 (MSDTDGKKTL…RARQKAMGGA (243 aa)) are disordered. The span at 43–67 (VPKPGAGKPSAGGSSPAGDPSRRPA) shows a compositional bias: low complexity. 3 stretches are compositionally biased toward basic and acidic residues: residues 85–147 (KARE…EAKR), 157–166 (EAPKAERSAE), and 175–205 (EGGD…DGRR). Residues 332-500 (PRPPVITIMG…AIALQAEILE (169 aa)) form the tr-type G domain. The G1 stretch occupies residues 341-348 (GHVDHGKT). 341-348 (GHVDHGKT) lines the GTP pocket. The G2 stretch occupies residues 366–370 (GITQH). The interval 388 to 391 (DTPG) is G3. Residues 388 to 392 (DTPGH) and 442 to 445 (NKID) contribute to the GTP site. The tract at residues 442 to 445 (NKID) is G4. Positions 478-480 (SAK) are G5.

The protein belongs to the TRAFAC class translation factor GTPase superfamily. Classic translation factor GTPase family. IF-2 subfamily.

Its subcellular location is the cytoplasm. Functionally, one of the essential components for the initiation of protein synthesis. Protects formylmethionyl-tRNA from spontaneous hydrolysis and promotes its binding to the 30S ribosomal subunits. Also involved in the hydrolysis of GTP during the formation of the 70S ribosomal complex. The polypeptide is Translation initiation factor IF-2 (Ruegeria pomeroyi (strain ATCC 700808 / DSM 15171 / DSS-3) (Silicibacter pomeroyi)).